We begin with the raw amino-acid sequence, 837 residues long: GRIP1-associated protein 1 (837 aa).

Residue Ala-2 is modified to N-acetylalanine. The stretch at 4-158 (ALSEEEFQRM…ALQERYGKEA (155 aa)) forms a coiled coil. Disordered stretches follow at residues 161-180 (PSAV…PISL), 555-577 (KGKE…ERDG), 647-666 (SEMN…VSSF), and 677-702 (SSAI…LSDE). Positions 204 to 637 (EQLQGLESSK…LQEILTNSKS (434 aa)) form a coiled coil. A compositionally biased stretch (polar residues) spans 648-666 (EMNSPSRTQTGDSSSVSSF). 8 positions are modified to phosphoserine: Ser-651, Ser-662, Ser-664, Ser-665, Ser-684, Ser-686, Ser-687, and Ser-688. Residues 678–690 (SAIPARSLSSSPQ) show a composition bias toward low complexity. 2 coiled-coil regions span residues 697-731 (AELS…LEVS) and 781-810 (DENL…KDME). Residue Ser-826 is modified to Phosphoserine.

Interacts with GRIP1, GRIP2 and AMPA receptors. Interacts (via C-terminus) with MAPK8/JNK1 and with MAP3K1/MEKK1; the interaction promotes MAP3K1-mediated phosphorylation of MAPK8. Interacts (via N-terminus) with RAB4A (in GTP-bound form). Interacts (via C-terminus) with STX12. Proteolytically cleaved by caspase-3. A minor C-terminal proteolytic fragment of 30 kDa is produced. Proteolytic cleavage is required for JNK signaling activation. Expressed in the central nervous system; especially in neurons.

Its subcellular location is the early endosome membrane. It localises to the recycling endosome membrane. The protein localises to the cell projection. The protein resides in the axon. It is found in the dendrite. Its subcellular location is the synapse. Its function is as follows. Regulates the endosomal recycling back to the neuronal plasma membrane, possibly by connecting early and late recycling endosomal domains and promoting segregation of recycling endosomes from early endosomal membranes. Involved in the localization of recycling endosomes to dendritic spines, thereby playing a role in the maintenance of dendritic spine morphology. Required for the activity-induced AMPA receptor recycling to dendrite membranes and for long-term potentiation and synaptic plasticity. Functions as a scaffold protein in neurons to facilitate MAP3K1/MEKK1-mediated activation of the JNK1 kinase by phosphorylation, possibly by bringing MAP3K1/MEKK1 and JNK1 in close proximity. This Rattus norvegicus (Rat) protein is GRIP1-associated protein 1 (Gripap1).